A 459-amino-acid chain; its full sequence is Exodeoxyribonuclease 7 large subunit (459 aa).

The protein belongs to the XseA family. As to quaternary structure, heterooligomer composed of large and small subunits.

It is found in the cytoplasm. It carries out the reaction Exonucleolytic cleavage in either 5'- to 3'- or 3'- to 5'-direction to yield nucleoside 5'-phosphates.. Bidirectionally degrades single-stranded DNA into large acid-insoluble oligonucleotides, which are then degraded further into small acid-soluble oligonucleotides. The sequence is that of Exodeoxyribonuclease 7 large subunit from Pseudomonas entomophila (strain L48).